The primary structure comprises 110 residues: UPF0060 membrane protein Swit_0423 (110 aa).

Helical transmembrane passes span 6-26 (LFIF…FWAW), 29-49 (LGKS…FAWL), 61-81 (AFAA…WAVE), and 90-110 (LIGV…PRTA).

This sequence belongs to the UPF0060 family.

It is found in the cell inner membrane. In Rhizorhabdus wittichii (strain DSM 6014 / CCUG 31198 / JCM 15750 / NBRC 105917 / EY 4224 / RW1) (Sphingomonas wittichii), this protein is UPF0060 membrane protein Swit_0423.